The primary structure comprises 181 residues: Dehydration-responsive element-binding protein 1E (181 aa).

The Nuclear localization signal motif lies at 14–26 (KKRAGRRIFKETR). The segment at residues 29–86 (IYRGVRRRDGDKWVCEVREPIHQRRVWLGTYPTADMAARAHDVAVLALRGRSACLNFS) is a DNA-binding region (AP2/ERF).

The protein belongs to the AP2/ERF transcription factor family. ERF subfamily.

It is found in the nucleus. Its function is as follows. Transcriptional activator that binds specifically to the DNA sequence 5'-[AG]CCGAC-3'. Binding to the C-repeat/DRE element mediates cold or dehydration-inducible transcription. CBF/DREB1 factors play a key role in freezing tolerance and cold acclimation. The sequence is that of Dehydration-responsive element-binding protein 1E (DREB1E) from Arabidopsis thaliana (Mouse-ear cress).